Reading from the N-terminus, the 134-residue chain is Small ribosomal subunit protein uS9 (134 aa).

The segment at 113–134 (REVERKKYGLKKARRAPQFSKR) is disordered. Residues 120-134 (YGLKKARRAPQFSKR) are compositionally biased toward basic residues.

This sequence belongs to the universal ribosomal protein uS9 family.

The sequence is that of Small ribosomal subunit protein uS9 (rpsI) from Thermotoga maritima (strain ATCC 43589 / DSM 3109 / JCM 10099 / NBRC 100826 / MSB8).